Consider the following 305-residue polypeptide: Urease accessory protein UreD (305 aa).

Belongs to the UreD family. In terms of assembly, ureD, UreF and UreG form a complex that acts as a GTP-hydrolysis-dependent molecular chaperone, activating the urease apoprotein by helping to assemble the nickel containing metallocenter of UreC. The UreE protein probably delivers the nickel.

It localises to the cytoplasm. Its function is as follows. Required for maturation of urease via the functional incorporation of the urease nickel metallocenter. The polypeptide is Urease accessory protein UreD (Delftia acidovorans (strain DSM 14801 / SPH-1)).